A 311-amino-acid chain; its full sequence is Mediator of RNA polymerase II transcription subunit 27 (311 aa).

Ser-132 carries the phosphoserine modification. At Lys-134 the chain carries N6-methyllysine.

The protein belongs to the Mediator complex subunit 27 family. Component of the Mediator complex, which is composed of MED1, MED4, MED6, MED7, MED8, MED9, MED10, MED11, MED12, MED13, MED13L, MED14, MED15, MED16, MED17, MED18, MED19, MED20, MED21, MED22, MED23, MED24, MED25, MED26, MED27, MED29, MED30, MED31, CCNC, CDK8 and CDC2L6/CDK11. The MED12, MED13, CCNC and CDK8 subunits form a distinct module termed the CDK8 module. Mediator containing the CDK8 module is less active than Mediator lacking this module in supporting transcriptional activation. Individual preparations of the Mediator complex lacking one or more distinct subunits have been variously termed ARC, CRSP, DRIP, PC2, SMCC and TRAP.

The protein localises to the nucleus. Functionally, component of the Mediator complex, a coactivator involved in the regulated transcription of nearly all RNA polymerase II-dependent genes. Mediator functions as a bridge to convey information from gene-specific regulatory proteins to the basal RNA polymerase II transcription machinery. Mediator is recruited to promoters by direct interactions with regulatory proteins and serves as a scaffold for the assembly of a functional preinitiation complex with RNA polymerase II and the general transcription factors. This chain is Mediator of RNA polymerase II transcription subunit 27 (MED27), found in Bos taurus (Bovine).